The chain runs to 2442 residues: MTVPPLLKSCVVKLLLPAALLAAAIIRPSFLSIGYVLLALVSAVLPPIRKSLALPKLVGTFVIITFLFCLAVALGVGSYQISEQVVHKNDRTYICNRSDTTLFRSIGLVRFHPTGTFESTRAFLPEIIATSAALLTIIIVMFLSHRDEQLDVVGDVVTVRSESGREQRRQRKLAAIMWSAIGNSLRRLTNFVLFLFTAYVGIVKPSLSNSIYFLAFLFISTWWSTYTPLRHGVYNQIKKFLIFYSALHFLVLYTYQIPIVHHSWLPTGSFLPRLFGLTVLMDSSCPEWWKFPFVAPDFNDDDLIMKWPLYANPIVVLVFFYLTVAQYKFTRNGSREYIDDNEYGSSVHEERFVSAGTVETNVDDVGQLISISESTASAPSGRGRGNTLLLSNASSSANDDEQGRARSRSPLRNGEEQGSIPLRKVTSQVVDRNKLSNIFNTTAPGDKESAASKGMIAVMTFVIFHSYSIALTAMMTWALLYHSIFGLILLILTCILWIFRDTRKSSFAMAPIILMYIEFLLILQYFLSMDIHAEIGDPAWMNFVGIEWTTLPVHAVIILCVQTLLTLPVFLLLRLARREKFYESLSDYERQRRINSYGTFGASKTGAGGVAVAKFQDPKSRKFAAFVEYLSNKVSVYFIFVVSVVLLVVSTCFAPNFYNILFFALWALNLIYLKFSFRLYRGLAYAFWLTLTFYTSIVIIALYIYQFPGVSQWIIRNTSLSQEWLNAIGLVDFRAIGESGALFLQLLAPIALFVVTMLQLKFFHGPWSRATSPRRAENDPPTSTTEAAAVASTSGTQGRAHAAGDTLVKKLHKLANQTIELLWRFFEVHISKIVFVIIAIFIANNINALYIPLVILLSLAICLPSAADGIFSLFMCAYLFLVALSKMIYQLDIVPELSQIDRGVGADNCSHGNISMPEWFGLKKEVEGTEPIYMLFGVIVSIIALAFQSIVIYRQRHYRASLGLPESMRAKVFPDFHHSHFDRSLKNAIQFLIDYGFYKFGLEITMIAIGIDIFNRMDALAAIQCFWLVLFALNKRVFVRRIWVFYVIYMAILYPLQFFSYVGLPPDSCIEYPWSYWIPSYSDDARFNLSYLLNLSIYGVNWPSAYLIGDFFVLLLASCQLAVFRREGEDNDSIYNDGNFVIKPENPQYDFIDTKKSYVDYFKSFVFHYGHWITLMSTLAAGIAGTSLFALGYIIFTLTMLWSGNNLYVMNSTLRSFEHTLKRWNALLGYTLFTITMKVCLQIFGCVFLSWFDQSGGWGKTLCIVRQLFSITCVNNECHVLKELEDFSKACAVETKEGNIGFDVIALSFLVFQIRIFHSWYFQHCMVEYRSEVILANRGAVLKNQLIEKEMKEQNEQQKAKFNDIRRRTEAIRERYQKQIERGAAERDFEPVTYGHAKRAGDYYMFKYDPENDDLVEPVDSFVPEVDPKATAYDRLDPGQIMYAATAHDLDLAKTVQQVKKGDTIKDPDSRALIAVSEPEARKPGGTEETDGDEDEDNKDSKVESTAKFIQKMIASALDLCSVTLNKLCREHRYVGFVLSKEKQKLKSGHSESLSNTSRKLTDIRSAVDLPSLQLVQSANDVEKMETAVSVDWQQKSSATRLLNAVVNCIGAHTDILCYFFAIMTQVMTGGLITLPLPLMSLFWGNLSNPRPSKFFWVTMITYTECVIVIKFVCQFAFMPYNSITWRTEHQMDPMSLDKLFGVSQRDSFALWDIVLLFSLFFHRYMLRKLGLWKDANLTDTFTLKEEPRSASGSDTGSPKKIAQEPKVVVTQSDTLEGTSGGEIVIPSDPNAVSNMEELDCEPPIPEKQSGPIGRFIHQLFHPKFRYIRDLYPIMFGIDVICFLIMTFGYSAFGEGGSGNVLDDVKASRIPVTLVVMLVGMTLAIIIDRALYLRKSVVGKLIYQVLMIAFLHIWVFLVLPNMTRRSAISNHVAQALYVIKSCYFLVSAWQIRNGYPELCIGNLLTHSYGMTNMIAFKVFMNIPFLFELRTAIDWTWTDTSMPLFDFFNMENFYAHIFNIKCARQFEAAYPAPRGIPKGKLVKYMMGFPIIIGVVIFIFSPLLLWSLLNQIGTISMPEKVTLRISIEGYPPLYEMEAQGSNHDNAELGMIKPDQLASLNQALTDSYTTRDTNSILRSRMSVSYLKGYTYEDILIVRFRPESEIYWPISQDSRNAMIDKLSRNTSVNFEVSLEFTRPYDPNENAALKHSKSWLVPISLDMTIRAKIQSALRGDPGHPILIPQSIPAFIQVPNQGELTLPTSIGNTIINDGNPRINTTGMEKSDEARAWFDSLTLNLEQGKSQNEKMWIATSEHPGDQNAKLWIKTANTTYSGRPYLQVVGFIDRAFPSFLAKVFKGGVIAVYLSVILVVGRGLVRGIFTTSPSTVMFTELPNADHLLKICLDIYLVREAKDFMLEQDLFAKLIFLFRSPATLIEWTRMSKKKQE.

Topologically, residues 1-5 are extracellular; sequence MTVPP. A helical membrane pass occupies residues 6–26; sequence LLKSCVVKLLLPAALLAAAII. Arginine 27 is a topological domain (cytoplasmic). The chain crosses the membrane as a helical span at residues 28–48; that stretch reads PSFLSIGYVLLALVSAVLPPI. Topologically, residues 49-56 are extracellular; sequence RKSLALPK. Residues 57–77 form a helical membrane-spanning segment; sequence LVGTFVIITFLFCLAVALGVG. Residues 78–122 lie on the Cytoplasmic side of the membrane; sequence SYQISEQVVHKNDRTYICNRSDTTLFRSIGLVRFHPTGTFESTRA. A helical membrane pass occupies residues 123 to 143; that stretch reads FLPEIIATSAALLTIIIVMFL. At 144–173 the chain is on the extracellular side; that stretch reads SHRDEQLDVVGDVVTVRSESGREQRRQRKL. The helical transmembrane segment at 174 to 196 threads the bilayer; the sequence is AAIMWSAIGNSLRRLTNFVLFLF. The Cytoplasmic portion of the chain corresponds to 197–198; sequence TA. The chain crosses the membrane as a helical span at residues 199–219; the sequence is YVGIVKPSLSNSIYFLAFLFI. Residues 220 to 239 lie on the Extracellular side of the membrane; that stretch reads STWWSTYTPLRHGVYNQIKK. Residues 240–260 traverse the membrane as a helical segment; it reads FLIFYSALHFLVLYTYQIPIV. At 261–303 the chain is on the cytoplasmic side; sequence HHSWLPTGSFLPRLFGLTVLMDSSCPEWWKFPFVAPDFNDDDL. Residues 304–324 traverse the membrane as a helical segment; the sequence is IMKWPLYANPIVVLVFFYLTV. At 325–454 the chain is on the extracellular side; the sequence is AQYKFTRNGS…GDKESAASKG (130 aa). Residues asparagine 332, asparagine 392, and asparagine 440 are each glycosylated (N-linked (GlcNAc...) asparagine). The interval 389 to 417 is disordered; that stretch reads LLSNASSSANDDEQGRARSRSPLRNGEEQ. A helical membrane pass occupies residues 455-475; the sequence is MIAVMTFVIFHSYSIALTAMM. Topologically, residues 476-478 are cytoplasmic; sequence TWA. Residues 479-499 form a helical membrane-spanning segment; the sequence is LLYHSIFGLILLILTCILWIF. Over 500 to 506 the chain is Extracellular; the sequence is RDTRKSS. Residues 507-527 form a helical membrane-spanning segment; sequence FAMAPIILMYIEFLLILQYFL. At 528–552 the chain is on the cytoplasmic side; that stretch reads SMDIHAEIGDPAWMNFVGIEWTTLP. Residues 553–573 form a helical membrane-spanning segment; it reads VHAVIILCVQTLLTLPVFLLL. The Extracellular portion of the chain corresponds to 574-633; sequence RLARREKFYESLSDYERQRRINSYGTFGASKTGAGGVAVAKFQDPKSRKFAAFVEYLSNK. Residues 634–654 traverse the membrane as a helical segment; it reads VSVYFIFVVSVVLLVVSTCFA. Residues 655 to 656 lie on the Cytoplasmic side of the membrane; it reads PN. Residues 657–677 traverse the membrane as a helical segment; that stretch reads FYNILFFALWALNLIYLKFSF. Residues 678–683 lie on the Extracellular side of the membrane; the sequence is RLYRGL. A helical transmembrane segment spans residues 684-704; that stretch reads AYAFWLTLTFYTSIVIIALYI. The Cytoplasmic portion of the chain corresponds to 705-739; it reads YQFPGVSQWIIRNTSLSQEWLNAIGLVDFRAIGES. Residues 740 to 760 form a helical membrane-spanning segment; sequence GALFLQLLAPIALFVVTMLQL. The Extracellular portion of the chain corresponds to 761 to 832; it reads KFFHGPWSRA…WRFFEVHISK (72 aa). The interval 768–798 is disordered; sequence SRATSPRRAENDPPTSTTEAAAVASTSGTQG. Residues 782-794 show a composition bias toward low complexity; sequence TSTTEAAAVASTS. The N-linked (GlcNAc...) asparagine glycan is linked to asparagine 816. The chain crosses the membrane as a helical span at residues 833–853; that stretch reads IVFVIIAIFIANNINALYIPL. The Cytoplasmic segment spans residues 854–874; the sequence is VILLSLAICLPSAADGIFSLF. The chain crosses the membrane as a helical span at residues 875–895; that stretch reads MCAYLFLVALSKMIYQLDIVP. Over 896-931 the chain is Extracellular; it reads ELSQIDRGVGADNCSHGNISMPEWFGLKKEVEGTEP. N-linked (GlcNAc...) asparagine glycans are attached at residues asparagine 908 and asparagine 913. A helical transmembrane segment spans residues 932-952; that stretch reads IYMLFGVIVSIIALAFQSIVI. Over 953–990 the chain is Cytoplasmic; the sequence is YRQRHYRASLGLPESMRAKVFPDFHHSHFDRSLKNAIQ. A helical membrane pass occupies residues 991–1011; sequence FLIDYGFYKFGLEITMIAIGI. Position 1012 (aspartate 1012) is a topological domain, extracellular. The chain crosses the membrane as a helical span at residues 1013 to 1033; that stretch reads IFNRMDALAAIQCFWLVLFAL. Over 1034 to 1041 the chain is Cytoplasmic; the sequence is NKRVFVRR. The helical transmembrane segment at 1042–1062 threads the bilayer; the sequence is IWVFYVIYMAILYPLQFFSYV. Over 1063–1096 the chain is Extracellular; it reads GLPPDSCIEYPWSYWIPSYSDDARFNLSYLLNLS. Asparagine 1088 and asparagine 1094 each carry an N-linked (GlcNAc...) asparagine glycan. Residues 1097 to 1117 traverse the membrane as a helical segment; the sequence is IYGVNWPSAYLIGDFFVLLLA. Topologically, residues 1118–1160 are cytoplasmic; that stretch reads SCQLAVFRREGEDNDSIYNDGNFVIKPENPQYDFIDTKKSYVD. Residues 1161-1181 traverse the membrane as a helical segment; that stretch reads YFKSFVFHYGHWITLMSTLAA. Residues 1182–1187 are Extracellular-facing; the sequence is GIAGTS. The chain crosses the membrane as a helical span at residues 1188–1210; it reads LFALGYIIFTLTMLWSGNNLYVM. The Cytoplasmic segment spans residues 1211 to 1231; the sequence is NSTLRSFEHTLKRWNALLGYT. Residues 1232-1252 form a helical membrane-spanning segment; the sequence is LFTITMKVCLQIFGCVFLSWF. Residues 1253–1299 are Extracellular-facing; sequence DQSGGWGKTLCIVRQLFSITCVNNECHVLKELEDFSKACAVETKEGN. The chain crosses the membrane as a helical span at residues 1300–1320; sequence IGFDVIALSFLVFQIRIFHSW. Topologically, residues 1321-1615 are cytoplasmic; sequence YFQHCMVEYR…VVNCIGAHTD (295 aa). Positions 1463–1502 are disordered; sequence DTIKDPDSRALIAVSEPEARKPGGTEETDGDEDEDNKDSK. The segment covering 1488 to 1498 has biased composition (acidic residues); that stretch reads EETDGDEDEDN. The chain crosses the membrane as a helical span at residues 1616-1636; it reads ILCYFFAIMTQVMTGGLITLP. At 1637-1654 the chain is on the extracellular side; it reads LPLMSLFWGNLSNPRPSK. Residue asparagine 1646 is glycosylated (N-linked (GlcNAc...) asparagine). Residues 1655–1675 form a helical membrane-spanning segment; it reads FFWVTMITYTECVIVIKFVCQ. At 1676–1706 the chain is on the cytoplasmic side; that stretch reads FAFMPYNSITWRTEHQMDPMSLDKLFGVSQR. The chain crosses the membrane as a helical span at residues 1707-1727; it reads DSFALWDIVLLFSLFFHRYML. At 1728–1833 the chain is on the extracellular side; sequence RKLGLWKDAN…KFRYIRDLYP (106 aa). An N-linked (GlcNAc...) asparagine glycan is attached at asparagine 1737. A helical membrane pass occupies residues 1834–1854; the sequence is IMFGIDVICFLIMTFGYSAFG. Topologically, residues 1855 to 1866 are cytoplasmic; it reads EGGSGNVLDDVK. Residues 1867–1887 form a helical membrane-spanning segment; the sequence is ASRIPVTLVVMLVGMTLAIII. Residues 1888–1900 are Extracellular-facing; that stretch reads DRALYLRKSVVGK. A helical transmembrane segment spans residues 1901 to 1921; sequence LIYQVLMIAFLHIWVFLVLPN. Topologically, residues 1922–1930 are cytoplasmic; it reads MTRRSAISN. The helical transmembrane segment at 1931–1951 threads the bilayer; it reads HVAQALYVIKSCYFLVSAWQI. Over 1952 to 2046 the chain is Extracellular; the sequence is RNGYPELCIG…KGKLVKYMMG (95 aa). A helical transmembrane segment spans residues 2047–2067; that stretch reads FPIIIGVVIFIFSPLLLWSLL. Over 2068–2346 the chain is Cytoplasmic; that stretch reads NQIGTISMPE…VGFIDRAFPS (279 aa). The chain crosses the membrane as a helical span at residues 2347-2367; that stretch reads FLAKVFKGGVIAVYLSVILVV. At 2368–2442 the chain is on the extracellular side; that stretch reads GRGLVRGIFT…WTRMSKKKQE (75 aa).

The protein belongs to the PIEZO (TC 1.A.75) family. As to expression, expressed in the pharyngeal-intestinal and spermathecal-uterine valves and in multiple reproductive tissues including the germline, somatic oviduct, and spermatheca. During reproduction, it is expressed in sheath cells, sperm, both spermathecal valves and the spermathecal bag cells.

Its subcellular location is the cell membrane. Its function is as follows. Pore-forming subunit of a mechanosensitive non-specific cation channel. Generates currents characterized by a linear current-voltage relationship. Plays a role in reproduction by positively regulating inter-tissue signaling to promote oocyte maturation, ovulation and fertilization, and sperm navigation from and to the spermatheca. May play a role in regulating cytosolic and endoplasmic reticulum calcium ion release. In Caenorhabditis elegans, this protein is Piezo-type mechanosensitive ion channel component 1.